We begin with the raw amino-acid sequence, 313 residues long: Porphobilinogen deaminase (313 aa).

Cys242 carries the S-(dipyrrolylmethanemethyl)cysteine modification.

It belongs to the HMBS family. Monomer. The cofactor is dipyrromethane.

It carries out the reaction 4 porphobilinogen + H2O = hydroxymethylbilane + 4 NH4(+). Its pathway is porphyrin-containing compound metabolism; protoporphyrin-IX biosynthesis; coproporphyrinogen-III from 5-aminolevulinate: step 2/4. Tetrapolymerization of the monopyrrole PBG into the hydroxymethylbilane pre-uroporphyrinogen in several discrete steps. This chain is Porphobilinogen deaminase, found in Escherichia coli (strain K12 / MC4100 / BW2952).